Reading from the N-terminus, the 479-residue chain is Putative F-box/LRR-repeat protein At1g56400 (479 aa).

The 49-residue stretch at Q12–T60 folds into the F-box domain. LRR repeat units follow at residues Y99 to F129, C139 to S167, I186 to Y211, V228 to G254, R287 to P312, L342 to I367, and L419 to M446.

The chain is Putative F-box/LRR-repeat protein At1g56400 from Arabidopsis thaliana (Mouse-ear cress).